Reading from the N-terminus, the 277-residue chain is Phosphatidylglycerol--prolipoprotein diacylglyceryl transferase (277 aa).

The next 4 helical transmembrane spans lie at 22-42 (WYGVIIASAVVIALLLALSEA), 51-71 (IIVDLLIWAIPISIISARIYY), 89-109 (IWHGGIAIYGALIGAVLTAII), and 116-136 (ISFWQLADVVAPSLIIAQAIG). R137 is an a 1,2-diacyl-sn-glycero-3-phospho-(1'-sn-glycerol) binding site. 3 helical membrane passes run 177–197 (QPTFLYESLWNVLGFILLLII), 205–225 (GELFLSYVIWYSFGRFFIEGM), and 235–255 (FRVSQVLSLLLIVLSIGLIIY).

The protein belongs to the Lgt family.

It localises to the cell membrane. The catalysed reaction is L-cysteinyl-[prolipoprotein] + a 1,2-diacyl-sn-glycero-3-phospho-(1'-sn-glycerol) = an S-1,2-diacyl-sn-glyceryl-L-cysteinyl-[prolipoprotein] + sn-glycerol 1-phosphate + H(+). It participates in protein modification; lipoprotein biosynthesis (diacylglyceryl transfer). Catalyzes the transfer of the diacylglyceryl group from phosphatidylglycerol to the sulfhydryl group of the N-terminal cysteine of a prolipoprotein, the first step in the formation of mature lipoproteins. The sequence is that of Phosphatidylglycerol--prolipoprotein diacylglyceryl transferase from Listeria welshimeri serovar 6b (strain ATCC 35897 / DSM 20650 / CCUG 15529 / CIP 8149 / NCTC 11857 / SLCC 5334 / V8).